Here is a 475-residue protein sequence, read N- to C-terminus: Cytosolic non-specific dipeptidase (475 aa).

Ser-58 carries the post-translational modification Phosphoserine. His-99 is a Mn(2+) binding site. Asp-101 is a catalytic residue. Asp-132 contributes to the Mn(2+) binding site. Catalysis depends on Glu-166, which acts as the Proton acceptor. Residues 166–167 (EE), Asp-195, and His-228 contribute to the substrate site. Glu-167 and Asp-195 together coordinate Mn(2+). Ser-299 carries the post-translational modification Phosphoserine. 4 residues coordinate substrate: Thr-330, Arg-343, Ser-417, and His-445. His-445 contacts Mn(2+).

This sequence belongs to the peptidase M20A family. In terms of assembly, homodimer. It depends on Mn(2+) as a cofactor. In terms of tissue distribution, highly expressed in the parafascicular nucleus of the thalamus, tuberomammillary nucleus of the hypothalamus and the mitral cell layer of the olfactory bulb.

It is found in the cytoplasm. The enzyme catalyses Hydrolysis of dipeptides, preferentially hydrophobic dipeptides including prolyl amino acids.. The catalysed reaction is L-threonyl-L-threonine + H2O = 2 L-threonine. It catalyses the reaction L-threonyl-L-serine + H2O = L-threonine + L-serine. It carries out the reaction L-seryl-L-threonine + H2O = L-threonine + L-serine. The enzyme catalyses L-cysteinylglycine + H2O = L-cysteine + glycine. The catalysed reaction is L-alanyl-L-cysteine + H2O = L-cysteine + L-alanine. It catalyses the reaction (S)-lactate + L-phenylalanine = N-[(S)-lactoyl]-L-phenylalanine + H2O. Inhibited by bestatin. Catalyzes the peptide bond hydrolysis in dipeptides, displaying a non-redundant activity toward threonyl dipeptides. Mediates threonyl dipeptide catabolism in a tissue-specific way. Has high dipeptidase activity toward cysteinylglycine, an intermediate metabolite in glutathione metabolism. Metabolizes N-lactoyl-amino acids, both through hydrolysis to form lactic acid and amino acids, as well as through their formation by reverse proteolysis. Plays a role in the regulation of cell cycle arrest and apoptosis. This chain is Cytosolic non-specific dipeptidase (Cndp2), found in Mus musculus (Mouse).